Consider the following 306-residue polypeptide: N-acetylmuramic acid 6-phosphate etherase (306 aa).

The region spanning 59 to 222 is the SIS domain; that stretch reads ISEALRQGGR…STGAMVQLGK (164 aa). Glu87 functions as the Proton donor in the catalytic mechanism. Residue Glu118 is part of the active site.

The protein belongs to the GCKR-like family. MurNAc-6-P etherase subfamily. Homodimer.

The enzyme catalyses N-acetyl-D-muramate 6-phosphate + H2O = N-acetyl-D-glucosamine 6-phosphate + (R)-lactate. Its pathway is amino-sugar metabolism; N-acetylmuramate degradation. Specifically catalyzes the cleavage of the D-lactyl ether substituent of MurNAc 6-phosphate, producing GlcNAc 6-phosphate and D-lactate. The protein is N-acetylmuramic acid 6-phosphate etherase of Gloeothece citriformis (strain PCC 7424) (Cyanothece sp. (strain PCC 7424)).